The following is a 421-amino-acid chain: 3-alpha-mycarosylerythronolide B desosaminyl transferase (421 aa).

The N-terminal stretch at 1–23 (MRVVFSSMASKSHLFGLVPLAWA) is a signal peptide.

The protein belongs to the glycosyltransferase 28 family. As to quaternary structure, heterotetramer composed of EryCII and EryCIII.

The catalysed reaction is 3-O-alpha-L-mycarosylerythronolide B + dTDP-alpha-D-desosamine = erythromycin D + dTDP + H(+). It participates in antibiotic biosynthesis; erythromycin biosynthesis. Functionally, catalyzes the conversion of alpha-L-mycarosylerythronolide B into erythromycin D in the erythromycin biosynthesis pathway. The polypeptide is 3-alpha-mycarosylerythronolide B desosaminyl transferase (eryCIII) (Saccharopolyspora erythraea (strain ATCC 11635 / DSM 40517 / JCM 4748 / NBRC 13426 / NCIMB 8594 / NRRL 2338)).